The sequence spans 78 residues: U-scoloptoxin(13)-Er1a (78 aa).

Residues Met-1–Ala-24 form the signal peptide.

The protein belongs to the scoloptoxin-13 family. Post-translationally, contains 4 disulfide bonds. Expressed by the venom gland.

It is found in the secreted. The sequence is that of U-scoloptoxin(13)-Er1a from Ethmostigmus rubripes (Giant centipede).